A 359-amino-acid polypeptide reads, in one-letter code: Type-1 angiotensin II receptor B (359 aa).

Residues 1–25 (MILNSSIEDGIKRIQDDCPKAGRHN) lie on the Extracellular side of the membrane. Asn4 carries N-linked (GlcNAc...) asparagine glycosylation. Angiotensin II-binding residues include Gln15 and Asp17. 2 disulfide bridges follow: Cys18/Cys274 and Cys101/Cys180. Residues 26 to 55 (YIFVMIPTLYSIIFVVGIFGNSLVVIVIYF) traverse the membrane as a helical segment. At 56–61 (YMKLKT) the chain is on the cytoplasmic side. The chain crosses the membrane as a helical span at residues 62-89 (VASVFLLNLALADLCFLLTLPLWAVYTA). At 90 to 98 (MEYQWPFGN) the chain is on the extracellular side. Residues 99–125 (HLCKIASASVSFNLYASVFLLTCLSID) form a helical membrane-spanning segment. The Cytoplasmic segment spans residues 126–141 (RYLAIVHPMKSRLRRT). Residues 142 to 165 (MLVAKVTCIIIWLMAGLASLPAVI) form a helical membrane-spanning segment. Topologically, residues 166–190 (HRNVYFIENTNITVCAFHYESQNST) are extracellular. Arg167 serves as a coordination point for angiotensin II. Asn176 carries N-linked (GlcNAc...) asparagine glycosylation. Phe182, His183, and Tyr184 together coordinate angiotensin II. N-linked (GlcNAc...) asparagine glycosylation is present at Asn188. Residues 191–216 (LPIGLGLTKNILGFVFPFVIILTSYT) traverse the membrane as a helical segment. Lys199 is a binding site for angiotensin II. The Cytoplasmic portion of the chain corresponds to 217–239 (LIWKALKKAYKIQKNTPRNDDIF). Residues 240–268 (RIIMAIVLFFFFSWVPHQIFSFLDVLIQL) traverse the membrane as a helical segment. At 269–278 (GVIHDCEIAD) the chain is on the extracellular side. A helical membrane pass occupies residues 279 to 304 (VVDTAMPITICIAYFNNCLNPLFYGF). At 305–359 (LGKKFKRYFLQLLKYIPPKARSHAGLSTKMSTLSYRPSDNMSSSARKSAYCFEVE) the chain is on the cytoplasmic side. Cys355 carries S-palmitoyl cysteine lipidation.

Belongs to the G-protein coupled receptor 1 family. Interacts with MAS1. Interacts with ARRB1. Interacts with FLNA (via filamin repeat 21); increases PKA-mediated phosphorylation of FLNA. Post-translationally, C-terminal Ser or Thr residues may be phosphorylated.

It localises to the cell membrane. Its function is as follows. Receptor for angiotensin II, a vasoconstricting peptide, which acts as a key regulator of blood pressure and sodium retention by the kidney. The activated receptor in turn couples to G-alpha proteins G(q) (GNAQ, GNA11, GNA14 or GNA15) and thus activates phospholipase C and increases the cytosolic Ca(2+) concentrations, which in turn triggers cellular responses such as stimulation of protein kinase C. The protein is Type-1 angiotensin II receptor B (Agtr1b) of Mus musculus (Mouse).